The chain runs to 161 residues: NADH-quinone oxidoreductase subunit I (161 aa).

2 4Fe-4S ferredoxin-type domains span residues 52 to 82 (LRRYPDGEERCIACKLCEAICPAQAITIEAK) and 92 to 121 (TKYDIDMTKCIYCGLCQEACPVDAIVEGPN). [4Fe-4S] cluster contacts are provided by cysteine 62, cysteine 65, cysteine 68, cysteine 72, cysteine 101, cysteine 104, cysteine 107, and cysteine 111.

Belongs to the complex I 23 kDa subunit family. As to quaternary structure, NDH-1 is composed of 14 different subunits. Subunits NuoA, H, J, K, L, M, N constitute the membrane sector of the complex. [4Fe-4S] cluster is required as a cofactor.

It is found in the cell inner membrane. The enzyme catalyses a quinone + NADH + 5 H(+)(in) = a quinol + NAD(+) + 4 H(+)(out). Functionally, NDH-1 shuttles electrons from NADH, via FMN and iron-sulfur (Fe-S) centers, to quinones in the respiratory chain. The immediate electron acceptor for the enzyme in this species is believed to be ubiquinone. Couples the redox reaction to proton translocation (for every two electrons transferred, four hydrogen ions are translocated across the cytoplasmic membrane), and thus conserves the redox energy in a proton gradient. This is NADH-quinone oxidoreductase subunit I from Orientia tsutsugamushi (strain Boryong) (Rickettsia tsutsugamushi).